Consider the following 670-residue polypeptide: Meiotic sister-chromatid recombination protein 6, mitochondrial (670 aa).

The transit peptide at 1–27 (MLFSRASKIRVSQLMRRLQSTAVGRAA) directs the protein to the mitochondrion.

It localises to the mitochondrion. Functionally, may be involved in the control of meiotic sister-chromatid recombination. The sequence is that of Meiotic sister-chromatid recombination protein 6, mitochondrial (MSC6) from Eremothecium gossypii (strain ATCC 10895 / CBS 109.51 / FGSC 9923 / NRRL Y-1056) (Yeast).